The primary structure comprises 368 residues: 2-aminoethylphosphonate--pyruvate transaminase (368 aa).

At lysine 192 the chain carries N6-(pyridoxal phosphate)lysine.

It belongs to the class-V pyridoxal-phosphate-dependent aminotransferase family. PhnW subfamily. In terms of assembly, homodimer. It depends on pyridoxal 5'-phosphate as a cofactor.

The catalysed reaction is (2-aminoethyl)phosphonate + pyruvate = phosphonoacetaldehyde + L-alanine. Functionally, involved in phosphonate degradation. This chain is 2-aminoethylphosphonate--pyruvate transaminase, found in Pseudomonas entomophila (strain L48).